A 381-amino-acid chain; its full sequence is 2-methylcitrate synthase 1 (381 aa).

Residue H192 coordinates substrate. H227 is an active-site residue. Residue 260–264 coordinates CoA; that stretch reads RIMGF. The active site involves H266. Substrate is bound at residue R275. D317 is a catalytic residue. The substrate site is built by R342 and R361.

The protein belongs to the citrate synthase family. Homodimer.

It carries out the reaction propanoyl-CoA + oxaloacetate + H2O = (2S,3S)-2-methylcitrate + CoA + H(+). It catalyses the reaction oxaloacetate + acetyl-CoA + H2O = citrate + CoA + H(+). Its pathway is carbohydrate metabolism; tricarboxylic acid cycle. Catalyzes the Claisen condensation of propionyl-CoA and oxaloacetate (OAA) to yield 2-methylcitrate (2-MC) and CoA. Also catalyzes the condensation of oxaloacetate with propionyl-CoA but with a lower specificity. In Corynebacterium glutamicum (strain ATCC 13032 / DSM 20300 / JCM 1318 / BCRC 11384 / CCUG 27702 / LMG 3730 / NBRC 12168 / NCIMB 10025 / NRRL B-2784 / 534), this protein is 2-methylcitrate synthase 1 (prpC1).